Here is a 92-residue protein sequence, read N- to C-terminus: DNA/RNA-binding protein Alba (92 aa).

K11 is subject to N6-acetyllysine.

This sequence belongs to the histone-like Alba family. Acetylated. Acetylation at Lys-11 decreases DNA-binding affinity.

It localises to the cytoplasm. It is found in the chromosome. In terms of biological role, binds double-stranded DNA tightly but without sequence specificity. Involved in DNA compaction. This is DNA/RNA-binding protein Alba from Pyrobaculum neutrophilum (strain DSM 2338 / JCM 9278 / NBRC 100436 / V24Sta) (Thermoproteus neutrophilus).